The sequence spans 257 residues: Gamma-secretase subunit APH-1B (257 aa).

Transmembrane regions (helical) follow at residues Val-5–Ile-25, Ile-32–Val-52, Leu-71–Tyr-91, Leu-115–Asn-135, Tyr-158–Phe-178, Trp-186–Ser-206, and Leu-213–Gly-233.

This sequence belongs to the APH-1 family. As to quaternary structure, probable component of the gamma-secretase complex, a complex composed of a presenilin homodimer (PSEN1 or PSEN2), nicastrin (NCSTN), APH1 (APH1A or APH1B) and PEN2. Such minimal complex is sufficient for secretase activity, although other components may exist. Interacts with PSEN1 and PSEN2. Weakly or not expressed in leukocytes, lung, placenta, small intestine, liver, kidney, spleen thymus, colon, skeletal muscle, heart and brain.

The protein localises to the membrane. Functionally, probable subunit of the gamma-secretase complex, an endoprotease complex that catalyzes the intramembrane cleavage of integral proteins such as Notch receptors and APP (amyloid-beta precursor protein). It probably represents a stabilizing cofactor for the presenilin homodimer that promotes the formation of a stable complex. Probably present in a minority of gamma-secretase complexes compared to APH1A. This is Gamma-secretase subunit APH-1B (APH1B) from Homo sapiens (Human).